A 455-amino-acid polypeptide reads, in one-letter code: MTSNPETPVVSNVTLSELRSDVNKRGTIDSYIYGPDEQVTTYFVREIRPCAAFSKMPVLLNTGNGSNKFGGTFTMPINASGDYLLALTAYISISAGKLRSYAAGTESSYFPKLAHKLIKSVRLKVDAKPLVELSSNFMDTWSEFMIDGGNYEAYTNMVGGDFQYSRSVDIGAKTLVLPIPLYFSRDSGVALPIGMMVNNRVTVEFVFRKLSDLLIKENVPDTGAGTGFMNMLTDGDFATPPEITKFEVVADFAVVTDFEIDRTSCSPHYILMEKPTDIAATEILKPTEAGSTLSYDIEHSSGILKALFFGVRNITHSEYLDYYEVGLPKSNNGVRSIGVSALSKIGIKCGDRYRVPMLPAEHFVFTEPYRAACRVPTRNRGQYMYSFALDLKTVDPKGSINPSNFNSSISVVIEPSEALRNSAETFEFTAIALTSYILYIDNGSLKKIDNGGDFN.

Belongs to the ascoviridae capsid protein family.

It localises to the virion. In terms of biological role, major protein of the capsid. This Heliothis virescens ascovirus 3e (HvAV-3e) protein is Major capsid protein (MCP).